Reading from the N-terminus, the 208-residue chain is Outer-membrane lipoprotein carrier protein (208 aa).

Positions methionine 1–alanine 21 are cleaved as a signal peptide.

The protein belongs to the LolA family. As to quaternary structure, monomer.

Its subcellular location is the periplasm. In terms of biological role, participates in the translocation of lipoproteins from the inner membrane to the outer membrane. Only forms a complex with a lipoprotein if the residue after the N-terminal Cys is not an aspartate (The Asp acts as a targeting signal to indicate that the lipoprotein should stay in the inner membrane). This chain is Outer-membrane lipoprotein carrier protein, found in Pseudomonas paraeruginosa (strain DSM 24068 / PA7) (Pseudomonas aeruginosa (strain PA7)).